Consider the following 349-residue polypeptide: Glycerol-1-phosphate dehydrogenase [NAD(P)+] (349 aa).

NAD(+) is bound by residues 95 to 99 (GKSID) and 117 to 120 (TSPS). Residue D122 coordinates substrate. S126 is a binding site for NAD(+). D169 contacts substrate. The Zn(2+) site is built by D169 and H249. H253 lines the substrate pocket. Residue H265 participates in Zn(2+) binding.

It belongs to the glycerol-1-phosphate dehydrogenase family. Homodimer. Requires Zn(2+) as cofactor.

The protein resides in the cytoplasm. The enzyme catalyses sn-glycerol 1-phosphate + NAD(+) = dihydroxyacetone phosphate + NADH + H(+). It carries out the reaction sn-glycerol 1-phosphate + NADP(+) = dihydroxyacetone phosphate + NADPH + H(+). Its pathway is membrane lipid metabolism; glycerophospholipid metabolism. Its function is as follows. Catalyzes the NAD(P)H-dependent reduction of dihydroxyacetonephosphate (DHAP or glycerone phosphate) to glycerol 1-phosphate (G1P). The G1P thus generated is used as the glycerophosphate backbone of phospholipids in the cellular membranes of Archaea. This chain is Glycerol-1-phosphate dehydrogenase [NAD(P)+], found in Hyperthermus butylicus (strain DSM 5456 / JCM 9403 / PLM1-5).